The sequence spans 53 residues: Large ribosomal subunit protein eL40 (53 aa).

The protein belongs to the eukaryotic ribosomal protein eL40 family.

This chain is Large ribosomal subunit protein eL40, found in Pyrobaculum neutrophilum (strain DSM 2338 / JCM 9278 / NBRC 100436 / V24Sta) (Thermoproteus neutrophilus).